The chain runs to 595 residues: Probable serine/threonine-protein kinase fhkC (595 aa).

Positions 1-84 are disordered; it reads MNSNKEETTA…MTEDNSKEED (84 aa). Residues 18 to 31 show a composition bias toward low complexity; sequence EEQQQQQQPQQQEQ. Positions 32–49 are enriched in polar residues; that stretch reads INTTTASTTSNGENTASD. Over residues 50–70 the composition is skewed to low complexity; the sequence is NNNNSNNNNNNNTNNTNTNNN. The 55-residue stretch at 116 to 170 folds into the FHA domain; that stretch reads IILGRSKGVCNYTFTSPTVSGKHCKIYRDPTVKSRNVAFVDDTSTNGTFINNEVI. The Protein kinase domain maps to 218-479; sequence YDLREVLGTG…IDQALNHPWF (262 aa). Residues 224–232 and Lys-247 contribute to the ATP site; that span reads LGTGNFASV. Residue Asp-342 is the Proton acceptor of the active site. Position 377 is a phosphothreonine; by autocatalysis (Thr-377). The disordered stretch occupies residues 494-595; the sequence is KLEFPPPSTN…DEHEQKKVKN (102 aa). The segment covering 508-520 has biased composition (polar residues); that stretch reads PTPNTTSSNSQLV. Positions 530–567 are enriched in low complexity; the sequence is DNTTDNNNNNNNNNNNNNNNNNNNTTNNSNNIDNNNGN. Residues 585–595 are compositionally biased toward basic and acidic residues; that stretch reads NDEHEQKKVKN.

Belongs to the protein kinase superfamily. CAMK Ser/Thr protein kinase family. CHK2 subfamily.

The catalysed reaction is L-seryl-[protein] + ATP = O-phospho-L-seryl-[protein] + ADP + H(+). It carries out the reaction L-threonyl-[protein] + ATP = O-phospho-L-threonyl-[protein] + ADP + H(+). This chain is Probable serine/threonine-protein kinase fhkC (fhkC), found in Dictyostelium discoideum (Social amoeba).